Consider the following 122-residue polypeptide: Prefoldin subunit 1 (122 aa).

The residue at position 2 (alanine 2) is an N-acetylalanine.

This sequence belongs to the prefoldin subunit beta family. Heterohexamer of two PFD-alpha type and four PFD-beta type subunits.

Its function is as follows. Binds specifically to cytosolic chaperonin (c-CPN) and transfers target proteins to it. Binds to nascent polypeptide chain and promotes folding in an environment in which there are many competing pathways for nonnative proteins. The protein is Prefoldin subunit 1 (PFDN1) of Bos taurus (Bovine).